The chain runs to 290 residues: MPSLKDLKNRIGSVKNTRKITKAMQMVAAAKLRRAQEAAEAARPYADRMAAVMAGLTAAAAGSDMAPRLLAGTGEDRRHLLVVMTSERGLAGGFNSSIVKLARLRLQELQAQGKQVSILTVGKKGREQLKREYGDLFVNHVDLSEVKRIGYDNARAIADEILDRFDNGEFDVATLFYNRFESVISQVPTARQVIPAVIEEGEAGASSLYDYEPDENAILNDLLPRSVATQVFAALLENAASEQGARMTAMDNATRNAGDMIDRLTTVYNRSRQAAITKELIEIISGAEAL.

Belongs to the ATPase gamma chain family. As to quaternary structure, F-type ATPases have 2 components, CF(1) - the catalytic core - and CF(0) - the membrane proton channel. CF(1) has five subunits: alpha(3), beta(3), gamma(1), delta(1), epsilon(1). CF(0) has three main subunits: a, b and c.

The protein localises to the cell inner membrane. Produces ATP from ADP in the presence of a proton gradient across the membrane. The gamma chain is believed to be important in regulating ATPase activity and the flow of protons through the CF(0) complex. The protein is ATP synthase gamma chain of Paracoccus denitrificans (strain Pd 1222).